We begin with the raw amino-acid sequence, 118 residues long: Vitelline membrane protein Vm32E (118 aa).

Positions 1–17 (MKIVALTLVAFVALAGA) are cleaved as a signal peptide. The VM domain occupies 36-75 (GYPAPPCPTNYLFSCQPNLAPAPCAQEAQAPAYGSAGAYT).

It belongs to the vitelline membrane family.

It is found in the secreted. In terms of biological role, major early eggshell protein. In Drosophila simulans (Fruit fly), this protein is Vitelline membrane protein Vm32E.